The chain runs to 706 residues: Transmembrane 9 superfamily member 3 (706 aa).

An N-terminal signal peptide occupies residues 1 to 33 (MRVRPKRSVITLMAIVVVMLILRNQFYSSRTRG). Residues 34–290 (HGQEPVISSS…LSDEQSIQFH (257 aa)) are Lumenal-facing. A helical membrane pass occupies residues 291-311 (WMSLANSVGIVLSISFITLII). Residues 312-371 (YVRVMYTDKSNSKSPKYMINIEGIETEDDLDDDKYGKYSVYTVAKDWIQNGRPNLFGLKV) lie on the Cytoplasmic side of the membrane. A helical transmembrane segment spans residues 372–392 (LILLVSFGVQFLFTIIGSLTI). Over 393–405 (SCSMNKLHNVRNS) the chain is Lumenal. A helical transmembrane segment spans residues 406–426 (VLTMAILFFVLGAFMASFVGT). Residues 427-456 (RLSMVTKTKRTKANYLDDNRYLKDYKKFSP) lie on the Cytoplasmic side of the membrane. A helical membrane pass occupies residues 457–477 (IFTILCGSSLPGIVMVSTFLL). Topologically, residues 478–494 (NSIVWAHDSTSALPFKT) are lumenal. The helical transmembrane segment at 495 to 515 (IVFFMSIYFIVCIPLSLFGGI) threads the bilayer. The Cytoplasmic segment spans residues 516–553 (VANNIPLPQYWLSGITKDESNSDGNGLFVPKSRAKFNP). Residues 554 to 574 (LVYCGIYLCGIFPLLVIYVEM) traverse the membrane as a helical segment. The Lumenal segment spans residues 575-592 (QYVYKSLWLEKTTFYYFY). The chain crosses the membrane as a helical span at residues 593-613 (GFLFLSIILLCVLTMEISIIG). The Cytoplasmic segment spans residues 614–637 (SYLLMRFCFEDKVVRNNWRWKCFE). Residues 638–658 (MGFSGGVYMELYSLYYIFAVL) form a helical membrane-spanning segment. Residues 659 to 665 (NIHGFSS) are Lumenal-facing. Residues 666 to 686 (ILISICYSLIFNVMCSLGLGA) traverse the membrane as a helical segment. Residues 687 to 706 (LSYLTASWFINKIYHQKVNL) lie on the Cytoplasmic side of the membrane.

Belongs to the nonaspanin (TM9SF) (TC 9.A.2) family.

It is found in the golgi apparatus membrane. Its function is as follows. With EMP70 and TMN2, plays a critical role in the late stages of a nutrient-controlled pathway notably regulating FLO11 gene expression. Acts downstream of RAS2 and TOR. Essential for cell adhesion and filamentous growth. May play a role as effector of cellular copper homeostasis. The protein is Transmembrane 9 superfamily member 3 (TMN3) of Saccharomyces cerevisiae (strain ATCC 204508 / S288c) (Baker's yeast).